The chain runs to 568 residues: Hexose transporter 1 (568 aa).

At 1–32 (MATEEMREKSLKREAESLWDIPPESYASKACS) the chain is on the cytoplasmic side. A helical transmembrane segment spans residues 33–53 (CMGTAAQLVMVAVLGSFQFGF). Topologically, residues 54 to 86 (NLSALNTSKAFIILDFGWCKDENGGHYSDCDTG) are extracellular. A disulfide bridge connects residues Cys-72 and Cys-83. Residues 87–107 (LVYGSLINTAVFLGACVGCLL) form a helical membrane-spanning segment. The Cytoplasmic segment spans residues 108-119 (GGRLTDFGRRAS). A helical transmembrane segment spans residues 120-140 (LIFTHCVCTLGCILSAAAEGF). Residues 141-142 (PT) are Extracellular-facing. The chain crosses the membrane as a helical span at residues 143–163 (LLIARLVVGVAVGMFTVCVPM). Residues 164-182 (YLSEVTPDDRRGYFGTFHQ) lie on the Cytoplasmic side of the membrane. Gln-182 contacts alpha-D-glucose. Residue Gln-182 participates in beta-D-glucose binding. A helical transmembrane segment spans residues 183–203 (LFITLGIFFGTLLGLAFGNAP). Residues 204-220 (AGDEVYEVSTFQQAWWR) lie on the Extracellular side of the membrane. Residues 221–241 (VMLGLPAVVSLLAIWLLWFVF) traverse the membrane as a helical segment. Topologically, residues 242–306 (PFETPQYMVE…KAIVHPTYRS (65 aa)) are cytoplasmic. The helical transmembrane segment at 307-327 (VILLACLLSIMQQFTGINVLV) threads the bilayer. Positions 318, 319, and 324 each coordinate alpha-D-glucose. Gln-318 lines the beta-D-glucose pocket. Residue Asn-324 participates in beta-D-glucose binding. Residues 328-345 (ANSNNLYSSLKLPQDAVT) lie on the Extracellular side of the membrane. A helical transmembrane segment spans residues 346–366 (GLTVGFTALNVFLTVITIPLV). Residue Asn-355 coordinates beta-D-glucose. The Cytoplasmic portion of the chain corresponds to 367–374 (DRLGRRTL). Residues 375–395 (LLFSEAVMFVAMGIAFVANLV) form a helical membrane-spanning segment. Residues 396 to 406 (DQSNTAVQWVT) lie on the Extracellular side of the membrane. A helical transmembrane segment spans residues 407–427 (VACVYVFIVGFAVGYGPVLWI). Trp-426 provides a ligand contact to alpha-D-glucose. Over 428 to 443 (YIHEIFPPEIKQGAAS) the chain is Cytoplasmic. The chain crosses the membrane as a helical span at residues 444–464 (LASALNWVATVAIVLPSDFLL). At 465 to 469 (KQGFS) the chain is on the extracellular side. Residues 470–490 (VFVGICTVALAIIFVVTFIFV) form a helical membrane-spanning segment. Over 491–568 (KETKGLSIEE…DDLTKGTEVV (78 aa)) the chain is Cytoplasmic.

The protein belongs to the major facilitator superfamily. Sugar transporter (TC 2.A.1.1) family. Homodimer.

It localises to the cell membrane. It carries out the reaction D-glucose(out) = D-glucose(in). It catalyses the reaction D-fructose(out) = D-fructose(in). The catalysed reaction is D-galactose(in) = D-galactose(out). The enzyme catalyses D-mannose(out) = D-mannose(in). It carries out the reaction D-glucosamine(out) = D-glucosamine(in). It catalyses the reaction D-xylose(out) = D-xylose(in). Its activity is regulated as follows. Inhibited by cytochalasin B. In terms of biological role, sodium-independent facilitative hexose transporter. Can transport D-glucose and D-mannose with high affinity, and D-fructose and D-galactose with low affinity. Can transport D-xylose and D-glucosamine. This is Hexose transporter 1 from Toxoplasma gondii.